A 2508-amino-acid chain; its full sequence is MFIYLFIYLFFKMDKKRTFYYLFFFFTFLVYVLYFDNIKSVLRSSTKKKKKKKICKSTFYVHEESEEIKSWLRNSNERDKGKKFFIFERLIKERKYICVNKYKRNNKLKWIYKNTYEKTKNICDDYNILFKCIKGIIYDKNKETFFETFFENFWDNIFYMNKYIFNIYYYMFDYTKKVKKKIEGIKENMNIRHNNNYNNIFYVHKFFLFNDDEEKKKRNDDIKINIKLHNNTRKLSVSEENVELKPYIKQGERNETVVNLYEYFTGGVKRSNNNNEIVVTSTEQFHRIVIICFKPTVKHSHIITSPHDALNHIVEENDKIKLSEEIYSIPFYPIYGNLGLKNVITTGIVEFMIPYFSRTQMNFTVTCANGEMNDLYKFEDLIKIRIRIPRNTKKILGLSTNEKDKTVFERIVDNTSNEYRFKSYNNKIVGIKLENSILDPPGCFKTVYEDDKILQLEVFLQYVKCINLDRDNYKIRFFFLPEDFGDEEIEFSCKFTYKKKTSKIIFGLGETSVDKDIFYLEDEHVKLNINQDISGDEPYYSHLNYNGIPYNICNFQYKSEYDSQVCERTIHEFSLFIYNCDTLVGTQIQTTEPITSVKYLNSTYPINKFSDITLLSKDIDIEGLEEAFRNSKFFLTSYINHGPFPLIIECVISNSNKDYQNVYILLHLRTSIKNRSVSFCDFEKVQGYNYLNNYIDGKICNINITSNSVFGFRCPSNSIKEPKDCFSQVYIDKKVYKLNDKLSNKLILYSMKQENLAIAGFNNYISNSFSFECYCIDKNQTYSSYERTSGEDIFNHIVKRIHVHYKNYDELYDYNIHDKITYEPIMKNPPITYLCDFLNKKQILQPLNNKTKNYICTIWYPKPLNYIALNCPTNRRDEQNDQTISEVYNSLQKDLLKPTGIEQQIDQKKKELNLLFNKRNIYSNLYHLPKNAPKRTINKNGLNIVNIDEIIPGILIKDVINMKLEDVIKPDLLTPTSFLHKTYNTNKSYLFSTRNKSTSVFNTPSIYTPLTHTSFSISPKSVPLTKSRIEETHSSSNTYEQYIGKRNSIENGFFIFQLPPYLKKNQTIEFACINDSTIKNKNVGNNGIMTIHLKSFGNPIEGCYFYKNSAKYNYLKKSIKIDDLKKEECTIRSDGEIEFVGIMCPYENNLYLTPSSCFLKTYDNTDNLVELLDINENFEYYSNDKGISYLKIPQEFLNHVHLFCYCNVDKDSVSDTNVLVKKENKISLELNYSNKGFNIIKTIDYQYEADILIGYSYYFKRVTPIYRKKHICDFTTEDNSLEPESEDKMIYSCYLSLENNLNFIEVKCPKNKKSSNSEWLFKYGTFDKSSEIMEDDENIKKYEHMKYMPEDKDEIIYLFKKQKLEDILPGVIIFDKNRYFFEKGNFSFVTPLIVKEDVTIKLLCDNSETKIDDKIGKKGIILIKIPQHITDKKFYGCDFSGDSNKKSSFYYTSVYDLKTQNQYCEVKLKENIIISLNCPNGNINPNNCFNNVFLKTNMNEQIHEKIQNIFDQVKVINTKSHVLLNSSSTFLIISKITKKELNFFCTCHHNETKNVGTIYIKNEDIINFSKAYNKESSILQYIDVTPYYLKDTYICDFTQNHYSISFDTSVNVQNVLERYLKILSDLYNTHEEFTYFSIHLKLKKEIMKKKYIDYLKKKINEYKEKETSDKIKRVTLSTNDNINTILVYRCNIDLGSFDKFKIKCPSKLNEEEVENNKLYPNLIYSSNLGLDETDMLNGLTKLLYGSVLINKTEKNVSFFEKGELELIISPYTDSSKNIIFSCENVPRNLSKGIIGSASIFIKKNDNKILGCDFIDTPSTLSSASTLESSYGSHASSPLSSSHHVLHNDNQGHDVHMINHIDISNKKNSFEFEIELIEGKNTYCNIEAIENDIVGFSCPYNFLTTPSDCFESIQIEGVDKELETHKLEKLLKGVKILNNDIYKYNFTPSYIILPKKIKKSLKIFCRCNSVKLIKTGIIQINIVGDDLNNWFKKEITHNIFAYQKMDYFYDFSKGPTNISSENVLGISTMSLMSSNKKVSRKKNHKEENRTQQNVYKEIENDHKNINENVNKYDNLPVTLLSSDEGDGYQADEDIGGEDDAEDVDGEGDDEDDNILNPLRTKQVYDIIVAASEFSKIEVVCPLRNSSQFRQSKISPENFFEYVYVLEDKNDDKRKRSIEENEKLVKAILEGKKNIDGHIINIEDINNKKSSKNASVEYDDMGNKIFISIISEKPKAVIGDNISSSRSSVHISNNIMNSSFQSNIHPDPITSDTTTSEYEQYNSYFKDILVIKNINEVISFANIKIDINEQTYSSSLHIPPLILKDAEFLISCDNSLTLNENTRGKTATVKIKVKSNFLKIYGCDFVGEFSTHFLFSKKWDDIPKNYICKINIQDDMLIGLACPSFTKLHPPDCFENIIVNQNVYKKNIIMETKNMFFYKQNDKPILSFVHVKKILVETFLCKCYQVTKADYKEVTIQILYEPYVMGTPKYTLEKSIIQYRYANLKPPLHI.

Residues 1 to 34 (MFIYLFIYLFFKMDKKRTFYYLFFFFTFLVYVLY) form the signal peptide. 4 N-linked (GlcNAc...) asparagine glycosylation sites follow: Asn230, Asn254, Asn362, and Asn414. The region spanning 394–516 (KILGLSTNEK…GLGETSVDKD (123 aa)) is the 6-Cys 1 domain. Cys443 and Cys493 form a disulfide bridge. 2 N-linked (GlcNAc...) asparagine glycosylation sites follow: Asn601 and Asn674. 6-Cys domains are found at residues 676 to 800 (SVSF…IVKR), 831 to 1096 (ITYL…LKSF), 1099 to 1231 (PIEG…LELN), 1268 to 1428 (KKHI…IPQH), and 1433 to 1565 (KFYG…NEDI). A disulfide bridge connects residues Cys680 and Cys700. A glycan (N-linked (GlcNAc...) asparagine) is linked at Asn703. Intrachain disulfides connect Cys714-Cys775 and Cys725-Cys773. N-linked (GlcNAc...) asparagine glycosylation is found at Asn779, Asn849, Asn986, Asn995, Asn1065, and Asn1074. Disulfide bonds link Cys835–Cys856 and Cys871–Cys1072. 3 disulfide bridges follow: Cys1103/Cys1129, Cys1144/Cys1206, and Cys1157/Cys1204. N-linked (GlcNAc...) asparagine glycosylation is present at Asn1231. Disulfide bonds link Cys1272–Cys1293, Cys1308–Cys1404, Cys1437–Cys1464, Cys1478–Cys1547, and Cys1488–Cys1545. A glycan (N-linked (GlcNAc...) asparagine) is linked at Asn1385. Residues Asn1525, Asn1550, Asn1567, Asn1750, Asn1755, and Asn1788 are each glycosylated (N-linked (GlcNAc...) asparagine). 6-Cys domains lie at 1656 to 1804 (KKKI…IKKN) and 1807 to 1984 (KILG…IVGD). Cys1704 and Cys1782 are joined by a disulfide. Cystine bridges form between Cys1811–Cys1883, Cys1897–Cys1966, and Cys1908–Cys1964. Asn2016 and Asn2047 each carry an N-linked (GlcNAc...) asparagine glycan. The tract at residues 2081–2113 (SDEGDGYQADEDIGGEDDAEDVDGEGDDEDDNI) is disordered. Over residues 2082–2112 (DEGDGYQADEDIGGEDDAEDVDGEGDDEDDN) the composition is skewed to acidic residues. Asn2143, Asn2211, Asn2239, and Asn2255 each carry an N-linked (GlcNAc...) asparagine glycan. 6-Cys domains follow at residues 2197 to 2354 (IINI…VKSN) and 2357 to 2481 (KIYG…YEPY). 3 cysteine pairs are disulfide-bonded: Cys2361/Cys2386, Cys2400/Cys2461, and Cys2411/Cys2459.

The protein localises to the cell surface. Its subcellular location is the cell membrane. Functionally, plays an essential role in male gamete fertility. Required for the binding to erythrocytes and thus, for the formation of exflagellation centers. The sequence is that of Male gametocyte surface protein P230p (PFS230P) from Plasmodium falciparum (isolate 3D7).